Reading from the N-terminus, the 249-residue chain is Vesicle-associated membrane protein-associated protein A (249 aa).

An N-acetylalanine modification is found at Ala2. The Cytoplasmic segment spans residues 2–227; it reads ASASGAMAKH…ASFRDNVTSP (226 aa). Positions 14 to 131 constitute an MSP domain; it reads ILVLDPPTDL…MDSKLRCVFE (118 aa). A phosphorylated FFAT motif binding region spans residues 50-53; the sequence is KVKT. Lys125 is subject to N6-acetyllysine. The span at 135–144 shows a compositional bias: basic and acidic residues; the sequence is ENDKLNDMEP. Residues 135–167 form a disordered region; that stretch reads ENDKLNDMEPSKAVPLNASKQDGPMPKPHSVSL. A Phosphoserine modification is found at Ser166. Residues 169-205 are a coiled coil; that stretch reads DTETRKLMEECKRLQGEMMKLSEENRHLRDEGLRLRK. Position 170 is a phosphothreonine (Thr170). Phosphoserine is present on residues Ser214, Ser216, and Ser219. The chain crosses the membrane as a helical; Anchor for type IV membrane protein span at residues 228–248; that stretch reads LPSLLVVIAAIFIGFFLGKFI.

Belongs to the VAMP-associated protein (VAP) (TC 9.B.17) family. In terms of assembly, homodimer; disulfide-linked. Heterodimer with VAPB. Interacts with VAMP1, VAMP2, STX1A, BET1, SEC22C and with the C-terminal domain of OCLN. Interacts (via MSP domain) with OSBPL1A (via FFAT motif). Interacts (via MSP domain) with ZFYVE27; may retain ZFYVE27 in the endoplasmic reticulum and regulate its function in cell projections formation. Interacts with OSBP. Interacts (via C-terminus) with RSAD2/viperin (via C-terminus). Interacts with IFITM3. Interacts with OSBPL3 (phosphorylated form). Interacts with KIF5A in a ZFYVE27-dependent manner. Interacts (via MSP domain) with STARD3 (via phosphorylated FFAT motif); this interaction recruits VAPA to the endosome. Interacts with STARD3NL (via FFAT motif). Interacts with CERT1. Interacts with PLEKHA3 and SACM1L to form a ternary complex. Interacts with VPS13A (via FFAT motif). Interacts with RB1CC1 (via phosphorylated FFAT motif), MIGA2 (via phosphorylated FFAT motif), RMDN3 (via phosphorylated FFAT motif), KCNB1 (via phosphorylated FFAT motif) and KCNB2 (via phosphorylated FFAT motif). Interacts (via MSP domain) with WDR44 (via FFAT-like motif); the interactions connect the endoplasmic reticulum (ER) with the endosomal tubule. (Microbial infection) Interacts with HCV protein NS5A and NS5B. In terms of tissue distribution, ubiquitous.

It localises to the endoplasmic reticulum membrane. It is found in the cell membrane. Its subcellular location is the cell junction. The protein localises to the tight junction. The protein resides in the nucleus membrane. Functionally, endoplasmic reticulum (ER)-anchored protein that mediates the formation of contact sites between the ER and endosomes via interaction with FFAT motif-containing proteins such as STARD3 or WDR44. STARD3-VAPA interaction enables cholesterol transfer from the ER to endosomes. Via interaction with WDR44 participates in neosynthesized protein export. In addition, recruited to the plasma membrane through OSBPL3 binding. The OSBPL3-VAPA complex stimulates RRAS signaling which in turn attenuates integrin beta-1 (ITGB1) activation at the cell surface. With OSBPL3, may regulate ER morphology. May play a role in vesicle trafficking. This chain is Vesicle-associated membrane protein-associated protein A, found in Homo sapiens (Human).